Reading from the N-terminus, the 504-residue chain is CDK5 regulatory subunit-associated protein 3 (504 aa).

3 short sequence motifs (shuffled ATG8-binding motif) span residues 266–269 (IDWG), 290–293 (IDWG), and 308–311 (IDWG). The interval 268–504 (WGDFGLEAVS…RPVNLMGTSV (237 aa)) is required for interaction with UFL1 and mediates interaction with CHEK1. Residues 353–368 (DELMELEIFLSQRAVE) are RPL10a-binding domain (RBD). K448 is covalently cross-linked (Glycyl lysine isopeptide (Lys-Gly) (interchain with G-Cter in SUMO2)).

Belongs to the CDK5RAP3 family. Substrate adapter component of the UFM1 ribosome E3 ligase (UREL) complex, composed of UFL1, DDRGK1 and CDK5RAP3. Interaction with UFL1 anchors CDK5RAP3 in the cytoplasm, preventing its translocation to the nucleus which allows expression of the CCND1 cyclin and progression of cells through the G1/S transition. Interacts with ATG8 family proteins MAP1LC3A, MAP1LC3B, GABARAP, GABARAPL1 and GABARAPL2. Interacts with CDK5R1; competes with CDK5RAP1 and CDK5RAP2. Interacts with RELA. Interacts with CHEK1; may negatively regulate CHEK1 and thereby stimulate entry into mitosis. Interacts with CDKN2A/ARF and MDM2; forms a ternary complex involved in regulation of p53/TP53. Interacts with MAPK14. Interacts with CCNB1. Interacts with TUBG1; may regulate CDK5RAP3 in mitotic G2/M transition checkpoint. In terms of processing, may be phosphorylated by CDK5. Post-translationally, ubiquitinated. Probably triggers proteasomal degradation and is negatively regulated by UFL1. May be ufmylated. In terms of processing, cleaved by caspases early during apoptosis, the resulting peptides may play a role in rupture of the nuclear envelope. Expressed in vascular endothelium. Up-regulated in failing heart. Highly expressed in the ventricular section in subacute and chronic ischemic heart failure.

The protein localises to the endoplasmic reticulum membrane. It is found in the cytoplasm. It localises to the nucleus. Its subcellular location is the cytoskeleton. The protein resides in the microtubule organizing center. The protein localises to the centrosome. Its function is as follows. Substrate adapter of E3 ligase complexes mediating ufmylation, the covalent attachment of the ubiquitin-like modifier UFM1 to substrate proteins, and which is involved in various processes, such as ribosome recycling and reticulophagy (also called ER-phagy). As part of the UREL complex, plays a key role in ribosome recycling by promoting mono-ufmylation of RPL26/uL24 subunit of the 60S ribosome. Ufmylation of RPL26/uL24 occurs on free 60S ribosomes following ribosome dissociation: it weakens the junction between post-termination 60S subunits and SEC61 translocons, promoting release and recycling of the large ribosomal subunit from the endoplasmic reticulum membrane. Ufmylation of RPL26/uL24 and subsequent 60S ribosome recycling either take place after normal termination of translation or after ribosome stalling during cotranslational translocation at the endoplasmic reticulum. Within the UREL complex, CDK5RAP3 acts as a substrate adapter that constrains UFL1 ligase activity to mono-ufmylate RPL26/uL24 at 'Lys-134'. The UREL complex is also involved in reticulophagy in response to endoplasmic reticulum stress by promoting ufmylation of proteins such as CYB5R3, thereby promoting lysosomal degradation of ufmylated proteins. Also acts as a regulator of transcription: negatively regulates NF-kappa-B-mediated gene transcription through the control of RELA phosphorylation. Also regulates mitotic G2/M transition checkpoint and mitotic G2 DNA damage checkpoint. Through its interaction with CDKN2A/ARF and MDM2 may induce MDM2-dependent p53/TP53 ubiquitination, stabilization and activation in the nucleus, thereby promoting G1 cell cycle arrest and inhibition of cell proliferation. May also play a role in the rupture of the nuclear envelope during apoptosis. May regulate MAPK14 activity by regulating its dephosphorylation by PPM1D/WIP1. Required for liver development. This is CDK5 regulatory subunit-associated protein 3 from Rattus norvegicus (Rat).